The following is a 239-amino-acid chain: Uridylate kinase (239 aa).

10–13 (KLSG) is an ATP binding site. Gly52 contacts UMP. Residues Gly53 and Arg57 each contribute to the ATP site. UMP is bound by residues Asp72 and 133 to 140 (TGNPFFTT). The ATP site is built by Thr160, Tyr166, and Asp169.

This sequence belongs to the UMP kinase family. As to quaternary structure, homohexamer.

The protein localises to the cytoplasm. It carries out the reaction UMP + ATP = UDP + ADP. The protein operates within pyrimidine metabolism; CTP biosynthesis via de novo pathway; UDP from UMP (UMPK route): step 1/1. Its activity is regulated as follows. Inhibited by UTP. Functionally, catalyzes the reversible phosphorylation of UMP to UDP. This chain is Uridylate kinase, found in Porphyromonas gingivalis (strain ATCC BAA-308 / W83).